Consider the following 159-residue polypeptide: LOB domain-containing protein 25 (159 aa).

In terms of domain architecture, LOB spans 38–139 (SPCAACKFLR…RELEETNADL (102 aa)).

This sequence belongs to the LOB domain-containing protein family. In terms of tissue distribution, expressed in young shoots, roots, stems, leaves and flowers.

The protein is LOB domain-containing protein 25 (LBD25) of Arabidopsis thaliana (Mouse-ear cress).